The primary structure comprises 607 residues: MCGIIGYSGSKANAVEVLLEGLEKVEYRGYDSAGIAFVTDSGIQIEKKEGKLENLKNHMKNFEVLSCTGIGHTRWATHGIPTDRNAHPHYSESKDVALIHNGIIENYVEIKKELLEQGVKFSSDTDTEVVAQLFSKLYDGDLYSTLKKVLKRIRGTYAFAIIHKDFPDKMICCRNHSPLIVGLGEHQNFIASDVSAILKYTRDIIYLEDGDVVLVTKDNVTVYDKDEKEVKREVKKVEWNFEQASKGGYAHFMIKEIEEQPEIIEKTLNVYTDKEKNVKFDEQLEGINFHDIDRIYIVACGTAYYAGLQGQYFMKKLLGIDVFTDIASEFRYNDPVITNKTLAIFVSQSGETIDTLMSMKYAKEKGARTLAISNVLGSTITREADNVIYTLAGPEISVASTKAYSSQVLVMYLLSLYMGAKLGKIEEKDYQKYISDISLLKENVVKLISEKEKIHDIAKKIKDIKNGFYLGRGIDEKVAREGSLKMKEINYIHTEALPAGELKHGSIALIEKGVLVVAISTNLEMDEKVVSNIKEVKARGAYVVGACKEGSLVPEVVDDVIQVKDSGELLTPVLTVVGLQYLAYYTSLEKGYDVDKPRNLAKSVTVE.

The Nucleophile; for GATase activity role is filled by C2. A Glutamine amidotransferase type-2 domain is found at 2 to 218; that stretch reads CGIIGYSGSK…DGDVVLVTKD (217 aa). SIS domains lie at 280 to 424 and 457 to 597; these read FDEQ…KLGK and IAKK…VDKP. The active-site For Fru-6P isomerization activity is K602.

Homodimer.

It localises to the cytoplasm. The catalysed reaction is D-fructose 6-phosphate + L-glutamine = D-glucosamine 6-phosphate + L-glutamate. Functionally, catalyzes the first step in hexosamine metabolism, converting fructose-6P into glucosamine-6P using glutamine as a nitrogen source. The protein is Glutamine--fructose-6-phosphate aminotransferase [isomerizing] of Fusobacterium nucleatum subsp. nucleatum (strain ATCC 25586 / DSM 15643 / BCRC 10681 / CIP 101130 / JCM 8532 / KCTC 2640 / LMG 13131 / VPI 4355).